The sequence spans 204 residues: Ras-related protein Rab-7L1 (204 aa).

The GTP site is built by S33, K34, H35, Y36, K37, and T39. The Effector region signature appears at 36–44 (YKSTVGVDF). T71 carries the post-translational modification Phosphothreonine; by LRRK2. S72 bears the Phosphoserine mark. K126, V156, and K157 together coordinate GTP. Residues C203 and C204 are each lipidated (S-geranylgeranyl cysteine).

This sequence belongs to the small GTPase superfamily. Rab family. Interacts with LRRK2 (via the N-terminus); this interaction is direct and stimulates kinase activity. In terms of tissue distribution, expressed predominantly in kidney and much less in brain, heart, muscle, fat, liver, spleen, adrenal gland, ovary, thymus and lung. Not expressed in testis and intestine.

It localises to the cell membrane. The protein resides in the cytoplasm. It is found in the perinuclear region. The protein localises to the golgi apparatus. Its subcellular location is the golgi apparatus membrane. It localises to the trans-Golgi network. The protein resides in the cytoskeleton. The small GTPases Rab are key regulators in vesicle trafficking. Essential for maintaining the integrity of endosome-trans-Golgi network structure. Together with LRRK2, plays a role in the retrograde trafficking pathway for recycling proteins, such as mannose 6 phosphate receptor (M6PR), between lysosomes and the Golgi apparatus in a retromer-dependent manner. Recruits LRRK2 to the Golgi apparatus and stimulates LRRK2 kinase activity. Stimulates phosphorylation of RAB10 'Thr-73' by LRRK2. Regulates also neuronal process morphology in the intact central nervous system (CNS). This Rattus norvegicus (Rat) protein is Ras-related protein Rab-7L1 (Rab29).